Consider the following 582-residue polypeptide: Fructose-1,6-bisphosphatase class 3 (582 aa).

Belongs to the FBPase class 3 family. The cofactor is Mn(2+).

The enzyme catalyses beta-D-fructose 1,6-bisphosphate + H2O = beta-D-fructose 6-phosphate + phosphate. It functions in the pathway carbohydrate biosynthesis; gluconeogenesis. The protein is Fructose-1,6-bisphosphatase class 3 of Saccharophagus degradans (strain 2-40 / ATCC 43961 / DSM 17024).